We begin with the raw amino-acid sequence, 1037 residues long: Signal-induced proliferation-associated protein 1 (1037 aa).

The segment at 1–85 is disordered; sequence MWAGGVGSPR…ASRPAATPTR (85 aa). Thr62 is modified (phosphothreonine). Phosphoserine occurs at positions 65, 178, 299, and 309. The region spanning 316 to 534 is the Rap-GAP domain; sequence LLTLDEQVLS…RTRQQYLQDL (219 aa). One can recognise a PDZ domain in the interval 682–758; it reads ELALPRDGQG…VCVTVLPPDE (77 aa). Phosphoserine occurs at positions 812 and 834. 2 disordered regions span residues 830–849 and 855–898; these read HNSLSSGSSLSDEAPVLPNT and LVTT…ASIL. Low complexity predominate over residues 871 to 881; sequence PPSQDQSGSPS. Ser907 is modified (phosphoserine). A disordered region spans residues 943–969; the sequence is REGQPISESGDPKEALKCDSEPEPGSL. A compositionally biased stretch (basic and acidic residues) spans 952 to 962; sequence GDPKEALKCDS. A coiled-coil region spans residues 968–1025; sequence SLSEKVSHLESMLWKLQEDLQREKADRAALEEEVRSLRHNNQRLLAESESAATRLLLA.

In terms of assembly, interacts with RRP1B; the interaction leads to inhibition of SIPA1 GTPase activity. In terms of tissue distribution, preferentially expressed in both fetal and adult lymphohematopoietic tissues.

It is found in the nucleus. The protein localises to the cytoplasm. It localises to the perinuclear region. Its subcellular location is the endomembrane system. Its function is as follows. GTPase activator for the nuclear Ras-related regulatory proteins Rap1, Rsr1 and Ran in vitro, converting them to the putatively inactive GDP-bound state. Affects cell cycle progression. The sequence is that of Signal-induced proliferation-associated protein 1 (Sipa1) from Mus musculus (Mouse).